Consider the following 328-residue polypeptide: tRNA uridine(34) hydroxylase (328 aa).

The Rhodanese domain maps to 130–224; that stretch reads LDKDTVVLDT…YGKDPEVQGE (95 aa). Cysteine 184 functions as the Cysteine persulfide intermediate in the catalytic mechanism.

It belongs to the TrhO family.

It carries out the reaction uridine(34) in tRNA + AH2 + O2 = 5-hydroxyuridine(34) in tRNA + A + H2O. Catalyzes oxygen-dependent 5-hydroxyuridine (ho5U) modification at position 34 in tRNAs. This Streptococcus pneumoniae (strain Taiwan19F-14) protein is tRNA uridine(34) hydroxylase.